The primary structure comprises 368 residues: F-box only protein 28 (368 aa).

A compositionally biased stretch (basic and acidic residues) spans 1–11; it reads MAAASEERMAE. Positions 1–56 are disordered; the sequence is MAAASEERMAEEGGGGHGDGGSCSAAGSAQRQPPAPPSQAPPPGSQAPAAPALAPD. Gly residues predominate over residues 12–21; sequence EGGGGHGDGG. The segment covering 22-32 has biased composition (low complexity); sequence SCSAAGSAQRQ. Residues 33 to 45 show a composition bias toward pro residues; sequence PPAPPSQAPPPGS. Low complexity predominate over residues 46 to 55; sequence QAPAAPALAP. Residues 61 to 109 enclose the F-box domain; it reads NNTLVALPIVAIENILSFMSYDEISQLRLVCKRMDLVCQRMLNQGFLKV. Residues Ser-235 and Ser-242 each carry the phosphoserine modification. Thr-270 carries the post-translational modification Phosphothreonine. The segment at 328–368 is disordered; the sequence is MESAVGTSSGSGQSEESPRKRRKATEAIDSLRKSKRLRNRK. Phosphoserine is present on Ser-344.

Part of a SCF (SKP1-cullin-F-box) protein ligase complex.

Its subcellular location is the chromosome. The protein localises to the centromere. It is found in the kinetochore. In terms of biological role, probably recognizes and binds to some phosphorylated proteins and promotes their ubiquitination and degradation. This chain is F-box only protein 28 (Fbxo28), found in Mus musculus (Mouse).